Here is a 183-residue protein sequence, read N- to C-terminus: Putative NAD(P)H nitroreductase YdjA (183 aa).

Residues 10–12 (RRS), R35, and H39 each bind FMN. 121-126 (AAVAQG) provides a ligand contact to NAD(+). Position 131–133 (131–133 (WRS)) interacts with FMN.

The protein belongs to the nitroreductase family. Homodimer. FMN serves as cofactor.

The protein is Putative NAD(P)H nitroreductase YdjA (ydjA) of Escherichia coli O157:H7.